We begin with the raw amino-acid sequence, 597 residues long: C4b-binding protein alpha chain (597 aa).

The N-terminal stretch at 1–48 (MHPPKTPSGALHRKRKMAAWPFSRLWKVSDPILFQMTLIAALLPAVLG) is a signal peptide. 8 consecutive Sushi domains span residues 49–110 (NCGP…FCIY), 111–172 (KRCR…QCEI), 173–236 (VKCK…TCEK), 237–296 (ITCR…ACEP), 297–362 (NSCI…GCEA), 363–424 (LCCP…SCGD), 425–482 (ICNF…QCKA), and 483–540 (LCRK…KCEW). Cystine bridges form between Cys-50–Cys-96, Cys-81–Cys-108, Cys-113–Cys-154, Cys-140–Cys-170, Cys-175–Cys-217, Cys-203–Cys-234, Cys-239–Cys-281, Cys-267–Cys-294, Cys-299–Cys-348, Cys-332–Cys-360, Cys-365–Cys-409, Cys-399–Cys-422, Cys-426–Cys-468, Cys-454–Cys-480, Cys-484–Cys-525, and Cys-511–Cys-538. Asn-221 carries an N-linked (GlcNAc...) asparagine glycan. Residues Asn-506 and Asn-528 are each glycosylated (N-linked (GlcNAc...) asparagine).

In terms of assembly, disulfide-linked complex of alpha and beta chains of 3 possible sorts: a 570 kDa complex of 7 alpha chains and 1 beta chain, a 530 kDa homoheptamer of alpha chains or a 500 kDa complex of 6 alpha chains and 1 beta chain. The central body of the alpha chain homomer supports tentacles, each with the binding site for C4b at the end. (Microbial infection) Interacts with Staphylococcus aureus protein SdrE; this interaction inhibits complement-mediated bacterial opsonization. Chylomicrons in the plasma.

It is found in the secreted. In terms of biological role, controls the classical pathway of complement activation. It binds as a cofactor to C3b/C4b inactivator (C3bINA), which then hydrolyzes the complement fragment C4b. It also accelerates the degradation of the C4bC2a complex (C3 convertase) by dissociating the complement fragment C2a. Alpha chain binds C4b. It also interacts with anticoagulant protein S and with serum amyloid P component. In Homo sapiens (Human), this protein is C4b-binding protein alpha chain (C4BPA).